Consider the following 357-residue polypeptide: D-amino-acid oxidase (357 aa).

Residues Ala-13, Gly-14, Ser-42, Gly-47, Arg-289, Gly-315, and Gly-318 each coordinate FAD. Position 289 (Arg-289) interacts with D-proline. Arg-289 serves as a coordination point for D-serine.

Belongs to the DAMOX/DASOX family. Requires FAD as cofactor.

The protein resides in the cytoplasm. The protein localises to the secreted. It is found in the cell wall. The enzyme catalyses a D-alpha-amino acid + O2 + H2O = a 2-oxocarboxylate + H2O2 + NH4(+). The catalysed reaction is D-phenylalanine + O2 + H2O = 3-phenylpyruvate + H2O2 + NH4(+). It catalyses the reaction D-lysine + O2 + H2O = 6-amino-2-oxohexanoate + H2O2 + NH4(+). It carries out the reaction D-methionine + O2 + H2O = 4-methylsulfanyl-2-oxobutanoate + H2O2 + NH4(+). The enzyme catalyses D-arginine + O2 + H2O = 5-guanidino-2-oxopentanoate + H2O2 + NH4(+). The catalysed reaction is D-ornithine + O2 + H2O = 5-amino-2-oxopentanoate + H2O2 + NH4(+). It catalyses the reaction D-leucine + O2 + H2O = 4-methyl-2-oxopentanoate + H2O2 + NH4(+). It carries out the reaction D-histidine + O2 + H2O = 3-(imidazol-5-yl)pyruvate + H2O2 + NH4(+). Activated by manganese, copper, and iron ions. Inhibited by barium, aluminum, and zinc ions. In terms of biological role, catalyzes the oxidative deamination of D-amino acids with broad substrate specificity. This Unknown prokaryotic organism protein is D-amino-acid oxidase.